A 794-amino-acid chain; its full sequence is Furin (794 aa).

The N-terminal stretch at 1–26 (MELRPWLLWVVAATGTLVLLAADAQG) is a signal peptide. Residues 27–107 (QKVFTNTWAV…QQVAKRRTKR (81 aa)) constitute a propeptide, inhibition peptide. Over 108–715 (DVYQEPTDPK…AGLLPSHLPE (608 aa)) the chain is Lumenal. Ca(2+) is bound at residue Asp115. The Peptidase S8 domain maps to 121–435 (QWYLSGVTQR…YGLLDAGAMV (315 aa)). The Charge relay system role is filled by Asp153. Asp154 is a binding site for substrate. Ca(2+) contacts are provided by Asp162, Asp174, Asp179, and Asp181. Residues 162-183 (DLAGNYDPGASFDVNDQDPDPQ) are disordered. Residue 191–192 (DN) participates in substrate binding. The Charge relay system role is filled by His194. Ca(2+) contacts are provided by Val205, Asn208, Val210, and Gly212. Intrachain disulfides connect Cys211-Cys360 and Cys303-Cys333. Substrate-binding positions include Glu236, 253–258 (SWGPED), Asp264, and 292–295 (ASGN). Asp258 contacts Ca(2+). Asp301 serves as a coordination point for Ca(2+). Substrate-binding residues include Asp306 and Tyr308. A Ca(2+)-binding site is contributed by Glu331. Ser368 (charge relay system) is an active-site residue. Ser368 is a binding site for substrate. N-linked (GlcNAc...) asparagine glycosylation is found at Asn387 and Asn440. One can recognise a P/Homo B domain in the interval 444 to 576 (VAPQRKCIID…TLVLYGTAPE (133 aa)). Cys450 and Cys474 are disulfide-bonded. Residues 498 to 500 (RGD) carry the Cell attachment site motif. An N-linked (GlcNAc...) asparagine glycan is attached at Asn553. FU repeat units follow at residues 577 to 620 (GLPV…GFAP) and 638 to 681 (ASVC…QSQS). A disordered region spans residues 673-696 (QTCSRQSQSSRESPPQQQPPRLPP). Residues 676–687 (SRQSQSSRESPP) show a composition bias toward low complexity. A helical transmembrane segment spans residues 716–738 (VVAGLSCAFIVLVFVTVFLVLQL). The Cytoplasmic segment spans residues 739–794 (RSGFSFRGVKVYTMDRGLISYKGLPPEAWQEECPSDSEEDEGRGERTAFIKDQSAL). Residues 759–762 (YKGL) form a cell surface signal region. The span at 767–780 (WQEECPSDSEEDEG) shows a compositional bias: acidic residues. The tract at residues 767-794 (WQEECPSDSEEDEGRGERTAFIKDQSAL) is disordered. Ser773 and Ser775 each carry phosphoserine; by CK2. Positions 773–779 (SDSEEDE) match the Trans Golgi network signal motif.

This sequence belongs to the peptidase S8 family. Furin subfamily. In terms of assembly, interacts with FLNA. Binds to PACS1 which mediates TGN localization and connection to clathrin adapters. Interacts with LAMP1, LAMP2 and LAMP3. Requires Ca(2+) as cofactor. The inhibition peptide, which plays the role of an intramolecular chaperone, is autocatalytically removed in the endoplasmic reticulum (ER) and remains non-covalently bound to furin as a potent autoinhibitor. Following transport to the trans Golgi, a second cleavage within the inhibition propeptide results in propeptide dissociation and furin activation. Post-translationally, phosphorylation is required for TGN localization of the endoprotease. In vivo, exists as di-, mono- and non-phosphorylated forms. Seems to be expressed ubiquitously.

The protein localises to the golgi apparatus. The protein resides in the trans-Golgi network membrane. It localises to the cell membrane. Its subcellular location is the secreted. It is found in the endosome membrane. The catalysed reaction is Release of mature proteins from their proproteins by cleavage of -Arg-Xaa-Yaa-Arg-|-Zaa- bonds, where Xaa can be any amino acid and Yaa is Arg or Lys. Releases albumin, complement component C3 and von Willebrand factor from their respective precursors.. With respect to regulation, inhibited by the not secondly cleaved propeptide. Inhibited by m-guanidinomethyl-phenylacetyl-Arg-Val-Arg-(amidomethyl)-benzamidine (m-guanidinomethyl-Phac-RVR-Amb) and 4-guanidinomethyl-phenylacetyl-Arg-Tle-Arg-4-amidinobenzylamide (MI-1148). Inhibited by Decanoyl-Arg-Val-Lys-Arg-chloromethylketone (decanoyl-RVKR-CMK). Inhibited by heparin/heparan sulfate-binding. Functionally, ubiquitous endoprotease within constitutive secretory pathways capable of cleavage at the RX(K/R)R consensus motif. Mediates processing of TGFB1, an essential step in TGF-beta-1 activation. Converts through proteolytic cleavage the non-functional Brain natriuretic factor prohormone into its active hormone BNP(1-32). By mediating processing of accessory subunit ATP6AP1/Ac45 of the V-ATPase, regulates the acidification of dense-core secretory granules in islets of Langerhans cells. (Microbial infection) Cleaves and activates diphtheria toxin DT. Its function is as follows. (Microbial infection) Cleaves and activates anthrax toxin protective antigen (PA). In terms of biological role, (Microbial infection) Cleaves and activates HIV-1 virus Envelope glycoprotein gp160. Functionally, (Microbial infection) Required for H7N1 and H5N1 influenza virus infection probably by cleaving hemagglutinin. (Microbial infection) Able to cleave S.pneumoniae serine-rich repeat protein PsrP. Its function is as follows. (Microbial infection) Facilitates human coronaviruses EMC and SARS-CoV-2 infections by proteolytically cleaving the spike protein at the monobasic S1/S2 cleavage site. This cleavage is essential for spike protein-mediated cell-cell fusion and entry into human lung cells. In terms of biological role, (Microbial infection) Facilitates mumps virus infection by proteolytically cleaving the viral fusion protein F. The polypeptide is Furin (Homo sapiens (Human)).